The chain runs to 177 residues: Putative adenylate kinase (177 aa).

ATP-binding residues include Gly10, Gly12, Lys13, Thr14, and Thr15. The tract at residues 30–53 (DITEAVKKYKLYTEKDEDMDSYVI) is NMP. Residues 103–113 (KRGYKPKKVLE) form an LID region. ATP is bound at residue Arg104.

The protein belongs to the adenylate kinase family. AK6 subfamily. Interacts with uS11. Not a structural component of 40S pre-ribosomes, but transiently interacts with them by binding to uS11.

The enzyme catalyses AMP + ATP = 2 ADP. It catalyses the reaction ATP + H2O = ADP + phosphate + H(+). In terms of biological role, broad-specificity nucleoside monophosphate (NMP) kinase that catalyzes the reversible transfer of the terminal phosphate group between nucleoside triphosphates and monophosphates. Also has ATPase activity. Involved in the late maturation steps of the 30S ribosomal particles, specifically 16S rRNA maturation. While NMP activity is not required for ribosome maturation, ATPase activity is. Associates transiently with small ribosomal subunit protein uS11. ATP hydrolysis breaks the interaction with uS11. May temporarily remove uS11 from the ribosome to enable a conformational change of the ribosomal RNA that is needed for the final maturation step of the small ribosomal subunit. The chain is Putative adenylate kinase from Methanocaldococcus jannaschii (strain ATCC 43067 / DSM 2661 / JAL-1 / JCM 10045 / NBRC 100440) (Methanococcus jannaschii).